Here is a 975-residue protein sequence, read N- to C-terminus: Importin-11 (975 aa).

Position 1 is an N-acetylmethionine (methionine 1). In terms of domain architecture, Importin N-terminal spans 28-100 (AEEQLKQWET…RAGLITNFNE (73 aa)). HEAT repeat units lie at residues 123-160 (RQWPELIPTLVESVKVQDDLRQHRALLTFYHVTKTLAS), 283-317 (QHPISFTPLIQRSLEFSVSYVFTEVGEGVTFERFI), 318-356 (VQCMNLIKMIVKNYAYKPSKNFEDSSPETLEAHKIKMAF), 422-459 (QTLTPVLLEMMQTLEGPTNVEDMNALLIKDAVYNAVGL), 473-509 (WFKTQLLPELQVSHNRYKPLRRRVIWLIGQWISVKFK), 511-548 (DLRPMLYEAICNLLQDQDLVVRIETATTLKLTVDDFEF), 555-593 (PYLETMFTLLFQLLQQVTECDTKMHVLHVLSCVIERVNV), 600-636 (GCLVQYLPLLWKQSEEHNMLRCAILTTLIHLVQGLGA), 640-677 (NLYPFLLPVIQLSTDVSQPPHVYLLEDGLELWLVTLEN), 683-720 (PELLRIFQNMSPLLELSSENLRTCFKIINGYIFLSSTE), 731-773 (QSFY…ILPC), 819-849 (QEMDQLLGNVIEMWVDRMDNITQPERKKLSA), 850-887 (LALLSLLPSDNSVIQDKFCGIINISVEALHDVMTEDPE), and 957-974 (METVDTEIVTQLQEFLQG). Position 343 is a phosphoserine (serine 343).

The protein belongs to the importin beta family. As to quaternary structure, interacts with UBE2E3 and RPL12.

The protein localises to the cytoplasm. It is found in the nucleus. Functionally, functions in nuclear protein import as nuclear transport receptor. Serves as receptor for nuclear localization signals (NLS) in cargo substrates. Is thought to mediate docking of the importin/substrate complex to the nuclear pore complex (NPC) through binding to nucleoporin and the complex is subsequently translocated through the pore by an energy requiring, Ran-dependent mechanism. At the nucleoplasmic side of the NPC, Ran binds to the importin, the importin/substrate complex dissociates and importin is re-exported from the nucleus to the cytoplasm where GTP hydrolysis releases Ran. The directionality of nuclear import is thought to be conferred by an asymmetric distribution of the GTP- and GDP-bound forms of Ran between the cytoplasm and nucleus. Mediates the nuclear import of RPL12, and of UBE2E3. The protein is Importin-11 (Ipo11) of Mus musculus (Mouse).